Consider the following 637-residue polypeptide: DNA mismatch repair protein MutL (637 aa).

Over residues 353-371 (GQGQRPVSSASMPSASRQA) the composition is skewed to polar residues. Residues 353 to 444 (GQGQRPVSSA…SEAASETPHD (92 aa)) are disordered. Over residues 378–389 (DWIKEGVQDWDW) the composition is skewed to basic and acidic residues. The segment covering 396-406 (PQNPPQNPPPG) has biased composition (pro residues). Over residues 430–444 (SGKELSEAASETPHD) the composition is skewed to basic and acidic residues.

It belongs to the DNA mismatch repair MutL/HexB family.

In terms of biological role, this protein is involved in the repair of mismatches in DNA. It is required for dam-dependent methyl-directed DNA mismatch repair. May act as a 'molecular matchmaker', a protein that promotes the formation of a stable complex between two or more DNA-binding proteins in an ATP-dependent manner without itself being part of a final effector complex. The protein is DNA mismatch repair protein MutL of Beijerinckia indica subsp. indica (strain ATCC 9039 / DSM 1715 / NCIMB 8712).